The primary structure comprises 219 residues: uncharacterized protein (219 aa).

The Cytoplasmic segment spans residues 1–15 (MLKLTTTSVTFHVLR). A helical transmembrane segment spans residues 16–36 (YFQLGLSVTNLLLASFAIITN). Residues 37 to 41 (YKVDR) lie on the Vacuolar side of the membrane. Residues 42–62 (ILRLSLAVSIISSVYFGIVRF) traverse the membrane as a helical segment. Leu63 is a topological domain (cytoplasmic). Residues 64 to 84 (PVLLIFVMEIVQTVLWFTAFV) traverse the membrane as a helical segment. Topologically, residues 85-116 (TLASKFGSMSCSSMPRGINFDYSGSCKIAKID) are vacuolar. A helical transmembrane segment spans residues 117–137 (ILPEAVLFILFLATTYASYIT). Residues 138 to 219 (VLSQAKENGS…VIDGSIEHSS (82 aa)) are Cytoplasmic-facing. The segment at 176–219 (PLLDLEVQEDARTETESIEDSTDSEDNANIEQEKVIDGSIEHSS) is disordered. Residues 191 to 203 (ESIEDSTDSEDNA) are compositionally biased toward acidic residues. The segment covering 206–219 (EQEKVIDGSIEHSS) has biased composition (basic and acidic residues).

It is found in the vacuole membrane. This is an uncharacterized protein from Saccharomyces cerevisiae (strain ATCC 204508 / S288c) (Baker's yeast).